The chain runs to 953 residues: Isoleucine--tRNA ligase (953 aa).

The 'HIGH' region signature appears at 57-67; sequence PYANGDIHIGH. E582 contributes to the L-isoleucyl-5'-AMP binding site. The short motif at 623–627 is the 'KMSKS' region element; the sequence is KMSKS. K626 contributes to the ATP binding site. The Zn(2+) site is built by C916, C919, C936, and C939.

It belongs to the class-I aminoacyl-tRNA synthetase family. IleS type 1 subfamily. As to quaternary structure, monomer. The cofactor is Zn(2+).

It is found in the cytoplasm. It carries out the reaction tRNA(Ile) + L-isoleucine + ATP = L-isoleucyl-tRNA(Ile) + AMP + diphosphate. In terms of biological role, catalyzes the attachment of isoleucine to tRNA(Ile). As IleRS can inadvertently accommodate and process structurally similar amino acids such as valine, to avoid such errors it has two additional distinct tRNA(Ile)-dependent editing activities. One activity is designated as 'pretransfer' editing and involves the hydrolysis of activated Val-AMP. The other activity is designated 'posttransfer' editing and involves deacylation of mischarged Val-tRNA(Ile). The polypeptide is Isoleucine--tRNA ligase (Bordetella avium (strain 197N)).